Here is a 1396-residue protein sequence, read N- to C-terminus: MNREALCHDDPIGHDRLRPDSIPRDPKWTDEQWQAITARNSDILVAAAAGAGKTAVLVERLIGIIKEGVDVDRLLVVTFTNAAAAEMRERIRTALTKELARHPHQTWLRQQLVLLNRATITTLHSFCLDLVRKYYYRLDLDPAFRVADETEIALLRQDVLDEVFERFYERAGAKEGTESKGEYFTALVDAYGGDRDDSPLQDIVLQLYEKALSQPWPEQWLQDILGKFQEAGDTIAEQTLPGELPAWEALPWFAALREEMSIDLAEVESLLVRALSLCRQPGGPAAYGDAVTADLQLTQDLHLAAGRSWTQLHECFQALSFTRVKAVRGPVDESLKKEVSRLRYQAKKKLTDLQKKYFLRTPHDLVSDLTQVLPLMATLVDVVLAFDRAFQAAKREKRLVDFNDLEHFCLRLLLDESASPGVPVPSSLALELKEHFAEVLTDEYQDTNTVQETILTLLSRNNRFMVGDVKQSIYRFRLAEPNLFLEKYRSFSPYDTPGPVNSDHGAPDHAFSGQGASVPGARIDLAKNFRSRRNVLSAVNDLFRRIMTPRAGEMAYDRQAELVYGAAFPELPGRSGDPVIELWLLQRQPDADGSEESIETQQNANETKGAIDGDHKNIAKAGESPAQNTADVAGESPSDDAGEDAGQPTGGEEELLLLETAQYEARLAARRIEELMKSAMPVYDREQGGYRPVCYRDIVILMRSTKGRADIFLEEFRAAAIPAYADTGAGYFEATEVSILLSLLRVIDNPCQDIPLAAVLRSPIFRFTGEDLARIRLAEPRKTFFDAIEAFIGQAEAAARDTFTPIDPVAIRLREFLRQIDAWRTLARRDSLAKLIATIYRETGFYDYAGAMPGGGQRQANLRALYDRARQYEATTLRGLFRFLRFIERLQDQGGDLGTARTLGEKEDVVRIMSIHKSKGLEFPVVFVAGLGSQFNLQDLRRDLLIHKNLGLGPVVVDTQLRYRYPTVAKLAIQRRLHRETLAEEMRILYVALTRAKEKLILLGTVREVAKSAQQWLHDAEGIPVAAALPDEVLLRAKCYLDWIGPALVGHPDGQEIRRWAEGAPALGATLPENNLTMTKNETMTEQERIDGSSRWRLFYAAKKELIGLRKETGSETPFNPVWLEKLRRLEPIIPTDLVDASLSWSYPYTGLSGIAAKVAVSRIKKQFVWHSPETPPSSETPPSLEIPPSLETPPSLETQTPSPDALVDLRPRFLQQDRRLTATERGSAVHLFLQHLDLAGEISQAGIAGQADRLVKLELLSLEQRQALNEEEILRFLESPLGHRLRKAKQVMREVPFTLALPAAEIYPEKRAEGESVIIQGVIDCLFEEDDGWLLLDYKTDRCPVGMDRERWLQQLRDSYLGQVNLYHRAVESVLKVKVKGRCLFLLSIGREMAL.

Residues 1 to 25 (MNREALCHDDPIGHDRLRPDSIPRD) form a disordered region. Residues 26–532 (PKWTDEQWQA…IDLAKNFRSR (507 aa)) enclose the UvrD-like helicase ATP-binding domain. Residue 47 to 54 (AAAGAGKT) participates in ATP binding. Disordered regions lie at residues 590–649 (DADG…GQPT) and 1171–1205 (HSPETPPSSETPPSLEIPPSLETPPSLETQTPSPD). In terms of domain architecture, UvrD-like helicase C-terminal spans 615 to 920 (HKNIAKAGES…RIMSIHKSKG (306 aa)). The segment covering 1181 to 1199 (TPPSLEIPPSLETPPSLET) has biased composition (low complexity).

It belongs to the helicase family. AddA subfamily. As to quaternary structure, heterodimer of AddA and AddB/RexB. The cofactor is Mg(2+).

It carries out the reaction Couples ATP hydrolysis with the unwinding of duplex DNA by translocating in the 3'-5' direction.. It catalyses the reaction ATP + H2O = ADP + phosphate + H(+). Functionally, the heterodimer acts as both an ATP-dependent DNA helicase and an ATP-dependent, dual-direction single-stranded exonuclease. Recognizes the chi site generating a DNA molecule suitable for the initiation of homologous recombination. The AddA nuclease domain is required for chi fragment generation; this subunit has the helicase and 3' -&gt; 5' nuclease activities. In Heliobacterium modesticaldum (strain ATCC 51547 / Ice1), this protein is ATP-dependent helicase/nuclease subunit A.